We begin with the raw amino-acid sequence, 192 residues long: ATP-dependent Clp protease proteolytic subunit 1 (192 aa).

Ser-92 acts as the Nucleophile in catalysis. The active site involves His-117.

This sequence belongs to the peptidase S14 family. As to quaternary structure, fourteen ClpP subunits assemble into 2 heptameric rings which stack back to back to give a disk-like structure with a central cavity, resembling the structure of eukaryotic proteasomes.

The protein localises to the cytoplasm. It catalyses the reaction Hydrolysis of proteins to small peptides in the presence of ATP and magnesium. alpha-casein is the usual test substrate. In the absence of ATP, only oligopeptides shorter than five residues are hydrolyzed (such as succinyl-Leu-Tyr-|-NHMec, and Leu-Tyr-Leu-|-Tyr-Trp, in which cleavage of the -Tyr-|-Leu- and -Tyr-|-Trp bonds also occurs).. Functionally, cleaves peptides in various proteins in a process that requires ATP hydrolysis. Has a chymotrypsin-like activity. Plays a major role in the degradation of misfolded proteins. This chain is ATP-dependent Clp protease proteolytic subunit 1, found in Chlamydia trachomatis serovar D (strain ATCC VR-885 / DSM 19411 / UW-3/Cx).